Reading from the N-terminus, the 211-residue chain is Large ribosomal subunit protein uL4 (211 aa).

Disordered stretches follow at residues 1 to 28 and 48 to 99; these read MAQAQVFDARTGRRSEMELKGPRFETEP and TAST…GPRY. Basic and acidic residues predominate over residues 10–28; sequence RTGRRSEMELKGPRFETEP.

This sequence belongs to the universal ribosomal protein uL4 family. In terms of assembly, part of the 50S ribosomal subunit.

One of the primary rRNA binding proteins, this protein initially binds near the 5'-end of the 23S rRNA. It is important during the early stages of 50S assembly. It makes multiple contacts with different domains of the 23S rRNA in the assembled 50S subunit and ribosome. Its function is as follows. Forms part of the polypeptide exit tunnel. The polypeptide is Large ribosomal subunit protein uL4 (Rubrobacter xylanophilus (strain DSM 9941 / JCM 11954 / NBRC 16129 / PRD-1)).